A 187-amino-acid chain; its full sequence is Superoxide dismutase [Cu-Zn] (187 aa).

The N-terminal stretch at 1–23 (MMKMKTLLALAISGICAAGVANA) is a signal peptide. The Cu cation site is built by H80, H82, and H105. C87 and C183 are disulfide-bonded. Positions 105, 114, 123, and 126 each coordinate Zn(2+). Residue H161 coordinates Cu cation.

The protein belongs to the Cu-Zn superoxide dismutase family. In terms of assembly, homodimer. The cofactor is Cu cation. It depends on Zn(2+) as a cofactor.

The protein localises to the periplasm. The catalysed reaction is 2 superoxide + 2 H(+) = H2O2 + O2. Its function is as follows. Destroys radicals which are normally produced within the cells and which are toxic to biological systems. Functionally, may confer survival advantage by accelerating dismutation of superoxide of environmental origin to hydrogen peroxide, disruptive to the normal mucociliary clearance process in the host. This chain is Superoxide dismutase [Cu-Zn] (sodC), found in Haemophilus parainfluenzae.